The primary structure comprises 408 residues: Multifunctional CCA protein (408 aa).

ATP contacts are provided by Gly-8 and Arg-11. Gly-8 and Arg-11 together coordinate CTP. 2 residues coordinate Mg(2+): Asp-21 and Asp-23. Arg-91, Arg-137, and Arg-140 together coordinate ATP. The CTP site is built by Arg-91, Arg-137, and Arg-140. The region spanning 228–329 (SGVHTLMVLE…VKLFDKADFW (102 aa)) is the HD domain.

This sequence belongs to the tRNA nucleotidyltransferase/poly(A) polymerase family. Bacterial CCA-adding enzyme type 1 subfamily. As to quaternary structure, monomer. Can also form homodimers and oligomers. The cofactor is Mg(2+). It depends on Ni(2+) as a cofactor.

It catalyses the reaction a tRNA precursor + 2 CTP + ATP = a tRNA with a 3' CCA end + 3 diphosphate. The enzyme catalyses a tRNA with a 3' CCA end + 2 CTP + ATP = a tRNA with a 3' CCACCA end + 3 diphosphate. Functionally, catalyzes the addition and repair of the essential 3'-terminal CCA sequence in tRNAs without using a nucleic acid template. Adds these three nucleotides in the order of C, C, and A to the tRNA nucleotide-73, using CTP and ATP as substrates and producing inorganic pyrophosphate. tRNA 3'-terminal CCA addition is required both for tRNA processing and repair. Also involved in tRNA surveillance by mediating tandem CCA addition to generate a CCACCA at the 3' terminus of unstable tRNAs. While stable tRNAs receive only 3'-terminal CCA, unstable tRNAs are marked with CCACCA and rapidly degraded. This Shewanella piezotolerans (strain WP3 / JCM 13877) protein is Multifunctional CCA protein.